Consider the following 263-residue polypeptide: 4-hydroxy-tetrahydrodipicolinate reductase (263 aa).

NAD(+) is bound by residues 7 to 12 (GFKGRM), 96 to 98 (GTT), and 122 to 125 (APNF). Histidine 152 functions as the Proton donor/acceptor in the catalytic mechanism. Histidine 153 is a (S)-2,3,4,5-tetrahydrodipicolinate binding site. Lysine 156 (proton donor) is an active-site residue. Position 162–163 (162–163 (GT)) interacts with (S)-2,3,4,5-tetrahydrodipicolinate.

It belongs to the DapB family.

The protein localises to the cytoplasm. The enzyme catalyses (S)-2,3,4,5-tetrahydrodipicolinate + NAD(+) + H2O = (2S,4S)-4-hydroxy-2,3,4,5-tetrahydrodipicolinate + NADH + H(+). It catalyses the reaction (S)-2,3,4,5-tetrahydrodipicolinate + NADP(+) + H2O = (2S,4S)-4-hydroxy-2,3,4,5-tetrahydrodipicolinate + NADPH + H(+). It functions in the pathway amino-acid biosynthesis; L-lysine biosynthesis via DAP pathway; (S)-tetrahydrodipicolinate from L-aspartate: step 4/4. Its function is as follows. Catalyzes the conversion of 4-hydroxy-tetrahydrodipicolinate (HTPA) to tetrahydrodipicolinate. This chain is 4-hydroxy-tetrahydrodipicolinate reductase, found in Listeria welshimeri serovar 6b (strain ATCC 35897 / DSM 20650 / CCUG 15529 / CIP 8149 / NCTC 11857 / SLCC 5334 / V8).